Here is a 67-residue protein sequence, read N- to C-terminus: MKSQAFFLLFLVVLLLATTQSEAFIMDLLGKIFGRRSMRNMDTMKYLYDPSLSAADLKTLQKLMENY.

A signal peptide spans 1 to 23 (MKSQAFFLLFLVVLLLATTQSEA). The residue at position 33 (Phe33) is a Phenylalanine amide. The propeptide occupies 37–67 (SMRNMDTMKYLYDPSLSAADLKTLQKLMENY).

It belongs to the non-disulfide-bridged peptide (NDBP) superfamily. Short antimicrobial peptide (group 4) family. As to expression, expressed by the venom gland.

The protein resides in the secreted. Its subcellular location is the target cell membrane. Its function is as follows. Amphipathic peptide that has antibacterial activities. The sequence is that of Amphipathic peptide Tx348 from Buthus israelis (Israeli scorpion).